A 216-amino-acid chain; its full sequence is Large ribosomal subunit protein uL4 (216 aa).

The interval 51 to 78 (KGRSEVHGSNTKPYKQKGTGRARRGDKK) is disordered. Basic residues predominate over residues 64 to 76 (YKQKGTGRARRGD).

This sequence belongs to the universal ribosomal protein uL4 family. As to quaternary structure, part of the 50S ribosomal subunit.

Functionally, one of the primary rRNA binding proteins, this protein initially binds near the 5'-end of the 23S rRNA. It is important during the early stages of 50S assembly. It makes multiple contacts with different domains of the 23S rRNA in the assembled 50S subunit and ribosome. Forms part of the polypeptide exit tunnel. This is Large ribosomal subunit protein uL4 from Treponema pallidum (strain Nichols).